Here is a 618-residue protein sequence, read N- to C-terminus: MEGEQDIGVEFLGDYKILCYLRKGLWCQDILAEHRFIKKRYILKLLCSELSSSEAFMTAFHEAIIKLATIRHPGIISIENVSQAEGQYFLVTEEKEVPTLSLAQYLSSCSQGLSELEAKDLICQLAEILDYAHANRLIHGGLSLDSVHIDLTGQSPKVFLPELGFSFLLKDQYTQSLLRDSSEKSSFDKLKQILLFQAPETALGTVAEDVYAFGVIVYFLLFRQLPQGAFPLPSEAFPEYVYDWDRLIQSCLSYAVEKRPKKLAPLLVKKTLGEQFLAAKIQCSEEDLREIEEEPQVPSVANILQKVEDKIIEETSDHLEFVLVEAKSIDEAMNTSVDSKEEVVAEDESYSNALQSLLIREPVVSRYVEEEKEEVKPQPLFTEMVFIEGGKFLRGSREGQRDEHPVHEIFLHSFFLDIHPVTNEQFVRYLECSGSEQDKYYNELIRLKDSRIQRRSGKLVIEPGYAKHPVVGVTWYGASGYASWVGKRLPTEAEWEIASCGGVTQLRYPCGEEIDKSQANFFSSDTTPVMSYPANPYGLYDMAGNVYEWCEDWYGYDFYEISAQESHAPQGPAQGVYRVLRGGCWKSLKDDLRCAHRHRNNPGAVNSTYGFRCAKGVK.

One can recognise a Protein kinase domain in the interval 15–381 (YKILCYLRKG…KEEVKPQPLF (367 aa)). ATP contacts are provided by residues 21–29 (LRKGLWCQD) and K44.

The protein belongs to the protein kinase superfamily. Ser/Thr protein kinase family. In terms of processing, autophosphorylated on serine and threonine residues.

The catalysed reaction is L-seryl-[protein] + ATP = O-phospho-L-seryl-[protein] + ADP + H(+). It carries out the reaction L-threonyl-[protein] + ATP = O-phospho-L-threonyl-[protein] + ADP + H(+). In terms of biological role, together with the serine/threonine kinase PknD, may play a role in the specific interactions with host proteins during intracellular growth. This Chlamydia caviae (strain ATCC VR-813 / DSM 19441 / 03DC25 / GPIC) (Chlamydophila caviae) protein is Serine/threonine-protein kinase pkn1 (pkn1).